We begin with the raw amino-acid sequence, 428 residues long: Glutamyl-tRNA reductase (428 aa).

Substrate contacts are provided by residues 50 to 53 (TCNR), Ser110, 115 to 117 (ETQ), and Gln121. Catalysis depends on Cys51, which acts as the Nucleophile. 190–195 (GAGEMG) lines the NADP(+) pocket.

It belongs to the glutamyl-tRNA reductase family. As to quaternary structure, homodimer.

It catalyses the reaction (S)-4-amino-5-oxopentanoate + tRNA(Glu) + NADP(+) = L-glutamyl-tRNA(Glu) + NADPH + H(+). It participates in porphyrin-containing compound metabolism; protoporphyrin-IX biosynthesis; 5-aminolevulinate from L-glutamyl-tRNA(Glu): step 1/2. Its function is as follows. Catalyzes the NADPH-dependent reduction of glutamyl-tRNA(Glu) to glutamate 1-semialdehyde (GSA). This Campylobacter curvus (strain 525.92) protein is Glutamyl-tRNA reductase.